We begin with the raw amino-acid sequence, 260 residues long: Indole-3-glycerol phosphate synthase (260 aa).

Belongs to the TrpC family.

The catalysed reaction is 1-(2-carboxyphenylamino)-1-deoxy-D-ribulose 5-phosphate + H(+) = (1S,2R)-1-C-(indol-3-yl)glycerol 3-phosphate + CO2 + H2O. It participates in amino-acid biosynthesis; L-tryptophan biosynthesis; L-tryptophan from chorismate: step 4/5. The chain is Indole-3-glycerol phosphate synthase from Thermoanaerobacter sp. (strain X514).